An 833-amino-acid chain; its full sequence is Urease (833 aa).

Residues 395 to 833 (GALDVHVHYI…LPLTRRYFVY (439 aa)) form the Urease domain. Ni(2+) is bound by residues His400 and His402. 2 residues coordinate urea: His402 and Ala433. Residue Lys483 participates in Ni(2+) binding. An N6-carboxylysine modification is found at Lys483. 2 residues coordinate urea: His485 and His512. Positions 512 and 538 each coordinate Ni(2+). The active-site Proton donor is His586. Asp626 contributes to the Ni(2+) binding site. Position 629 (Ala629) interacts with urea.

The protein in the C-terminal section; belongs to the metallo-dependent hydrolases superfamily. Urease alpha subunit family. In terms of assembly, homohexamer. Ni(2+) serves as cofactor. Carboxylation allows a single lysine to coordinate two nickel ions.

It carries out the reaction urea + 2 H2O + H(+) = hydrogencarbonate + 2 NH4(+). It participates in nitrogen metabolism; urea degradation; CO(2) and NH(3) from urea (urease route): step 1/1. Its activity is regulated as follows. The urease accessory proteins URE4, URE6 and URE7 are required for urease activity, URE7 supplying nickel for the functional urease. In terms of biological role, plays a nutritional role via nitrogen acquisition in the environment. Contributes to the central nervous system invasion by enhancing yeast sequestration within microcapillary beds (such as within the brain) during hematogenous spread, thereby facilitating blood-to-brain invasion by C.neoformans. Affects fitness within the mammalian phagosome, promoting non-lytic exocytosis while delaying intracellular replication and thus reducing phagolysosomal membrane damage, events that could facilitate cryptococcal dissemination when transported inside macrophages. Urease activity is also associated with the regulation of key intracellular metabolic pathways, including melanin biosynthesis, polyamine biosynthesis, as well as intracellular levels of proline and reactive oxygen species. The protein is Urease of Cryptococcus neoformans var. grubii serotype A (strain H99 / ATCC 208821 / CBS 10515 / FGSC 9487) (Filobasidiella neoformans var. grubii).